A 395-amino-acid polypeptide reads, in one-letter code: Axin-like protein 1 (395 aa).

The RGS domain maps to 4-132 (RSKTFSDRIL…TTTADVSNTW (129 aa)). Residues 190 to 230 (QETKNSSETEEEKKKERSADPYGSDGFAPPPQSTQTHTLRN) are disordered. The segment covering 194-208 (NSSETEEEKKKERSA) has biased composition (basic and acidic residues). The DIX domain occupies 301–386 (EIQKLTVELR…RITAICRMCP (86 aa)).

In terms of assembly, interacts with bar-1, dsh-2, gsk-3, and mig-5.

Functionally, works in parallel with pry-1 in negatively regulating bar-1 signaling in vulval precursor cells and Q neuroblasts. Shown to have a role in excretory cell development. In Caenorhabditis briggsae, this protein is Axin-like protein 1 (axl-1).